Here is a 1256-residue protein sequence, read N- to C-terminus: Protein flightless-1 (1256 aa).

LRR repeat units follow at residues 4 to 28 (LPFV…MRQM), 29 to 51 (SRVQ…LGHL), 52 to 74 (QKLE…LTEL), 75 to 99 (SCLR…LFHL), 100 to 122 (EELT…LERA), 124 to 145 (NLIV…LFIH), 147 to 169 (TDLL…TRRL), 171 to 192 (NLKT…QLPS), 218 to 241 (LANL…VYNV), 243 to 264 (TLVR…VELW), 265 to 287 (QRLE…LCKL), 289 to 312 (KLRR…IGKL), 313 to 335 (GALE…LCRC), 336 to 358 (GALK…IHLL), and 360 to 381 (GLDQ…PSEA). Residues 405 to 476 (AAVPPSMPSS…ESLKPKRWDE (72 aa)) form a disordered region. Positions 431–476 (PRSEGDQDAAKVLKGMKDVAKDKDNEAGAVPEDGKPESLKPKRWDE) are enriched in basic and acidic residues. Gelsolin-like repeat units follow at residues 512-589 (IEEV…EQFL), 633-703 (EPVA…AEFW), 749-822 (VELP…MQIF), and 1168-1242 (EKCA…SRRF).

Belongs to the villin/gelsolin family. As to expression, found in ovaries, larval fat bodies, brain and adult thorax.

Functionally, may play a key role in embryonic cellularization by interacting with both the cytoskeleton and other cellular components. Alternatively, it may play a structural role in indirect flight muscle. Vital for embryonic development. This is Protein flightless-1 (fliI) from Drosophila melanogaster (Fruit fly).